The chain runs to 942 residues: Calcium-activated chloride channel regulator 2 (942 aa).

The signal sequence occupies residues M1–G32. Residues L33–V905 are Extracellular-facing. The interval D54 to V205 is metalloprotease domain. N-linked (GlcNAc...) asparagine glycosylation is found at N74 and N97. H164 is a Zn(2+) binding site. E165 is an active-site residue. Positions 168 and 175 each coordinate Zn(2+). Residues N231, N235, N254, and N286 are each glycosylated (N-linked (GlcNAc...) asparagine). Residues V311–I483 form the VWFA domain. N-linked (GlcNAc...) asparagine glycans are attached at residues N522, N580, N637, and N821. Residues L906 to F926 form a helical membrane-spanning segment. Over N927–L942 the chain is Cytoplasmic.

The protein belongs to the CLCR family. In terms of processing, the translation product is autoproteolytically cleaved by the metalloprotease domain in the endoplasmic reticulum into a N-terminal and a C-terminal products that remain physically associated with each other. The cleavage is necessary for calcium-activated chloride channel (CaCC) activation activity. Post-translationally, N-glycosylated. In terms of tissue distribution, highly expressed in eye, spleen, lung, kidney, uterus, and endothelial cells. Weakly expressed in heart and throughout the gastrointestinal tract. Highly expressed in mammary cell lines. Its expression in immortalized cell line HC11 correlates with slow or arrested growth. Re-expression in mammary tumor cells reduces colony survival.

The protein resides in the cell membrane. It localises to the basal cell membrane. The protein localises to the cell junction. Its function is as follows. Plays a role in modulating chloride current across the plasma membrane in a calcium-dependent manner, and cell adhesion. Involved in basal cell adhesion and/or stratification of squamous epithelia. May act as a tumor suppressor in breast and colorectal cancer. Plays a key role for cell adhesion in the beginning stages of lung metastasis via the binding to ITGB4. The protein is Calcium-activated chloride channel regulator 2 (Clca2) of Mus musculus (Mouse).